The sequence spans 351 residues: UDP-N-acetylglucosamine--N-acetylmuramyl-(pentapeptide) pyrophosphoryl-undecaprenol N-acetylglucosamine transferase (351 aa).

Residues Thr12–Gly14, Asn124, Arg160, Ser188, Ile239, Ala258–Glu263, and Gln283 each bind UDP-N-acetyl-alpha-D-glucosamine.

This sequence belongs to the glycosyltransferase 28 family. MurG subfamily.

Its subcellular location is the cell inner membrane. The enzyme catalyses di-trans,octa-cis-undecaprenyl diphospho-N-acetyl-alpha-D-muramoyl-L-alanyl-D-glutamyl-meso-2,6-diaminopimeloyl-D-alanyl-D-alanine + UDP-N-acetyl-alpha-D-glucosamine = di-trans,octa-cis-undecaprenyl diphospho-[N-acetyl-alpha-D-glucosaminyl-(1-&gt;4)]-N-acetyl-alpha-D-muramoyl-L-alanyl-D-glutamyl-meso-2,6-diaminopimeloyl-D-alanyl-D-alanine + UDP + H(+). Its pathway is cell wall biogenesis; peptidoglycan biosynthesis. Cell wall formation. Catalyzes the transfer of a GlcNAc subunit on undecaprenyl-pyrophosphoryl-MurNAc-pentapeptide (lipid intermediate I) to form undecaprenyl-pyrophosphoryl-MurNAc-(pentapeptide)GlcNAc (lipid intermediate II). The chain is UDP-N-acetylglucosamine--N-acetylmuramyl-(pentapeptide) pyrophosphoryl-undecaprenol N-acetylglucosamine transferase from Glaesserella parasuis serovar 5 (strain SH0165) (Haemophilus parasuis).